The following is a 112-amino-acid chain: Small ribosomal subunit protein bS6 (112 aa).

This sequence belongs to the bacterial ribosomal protein bS6 family.

Functionally, binds together with bS18 to 16S ribosomal RNA. This Chlamydia trachomatis serovar L2 (strain ATCC VR-902B / DSM 19102 / 434/Bu) protein is Small ribosomal subunit protein bS6.